Reading from the N-terminus, the 106-residue chain is Replication restart protein PriB (106 aa).

The SSB domain maps to threonine 4–aspartate 103.

It belongs to the PriB family. As to quaternary structure, homodimer. Interacts with PriA and DnaT. Component of the replication restart primosome. Primosome assembly occurs via a 'hand-off' mechanism. PriA binds to replication forks, subsequently PriB then DnaT bind; DnaT then displaces ssDNA to generate the helicase loading substrate.

Involved in the restart of stalled replication forks, which reloads the replicative helicase on sites other than the origin of replication; the PriA-PriB pathway is the major replication restart pathway. During primosome assembly it facilitates complex formation between PriA and DnaT on DNA; stabilizes PriA on DNA. Stimulates the DNA unwinding activity of PriA helicase. This is Replication restart protein PriB from Yersinia pestis.